The chain runs to 298 residues: N-acetylmuramic acid 6-phosphate etherase (298 aa).

Residues 55–218 (IHAQVSGGGR…STGLMIKSGK (164 aa)) form the SIS domain. Catalysis depends on glutamate 83, which acts as the Proton donor. Residue glutamate 114 is part of the active site.

The protein belongs to the GCKR-like family. MurNAc-6-P etherase subfamily. In terms of assembly, homodimer.

The catalysed reaction is N-acetyl-D-muramate 6-phosphate + H2O = N-acetyl-D-glucosamine 6-phosphate + (R)-lactate. The protein operates within amino-sugar metabolism; 1,6-anhydro-N-acetylmuramate degradation. Its pathway is amino-sugar metabolism; N-acetylmuramate degradation. It functions in the pathway cell wall biogenesis; peptidoglycan recycling. In terms of biological role, specifically catalyzes the cleavage of the D-lactyl ether substituent of MurNAc 6-phosphate, producing GlcNAc 6-phosphate and D-lactate. Together with AnmK, is also required for the utilization of anhydro-N-acetylmuramic acid (anhMurNAc) either imported from the medium or derived from its own cell wall murein, and thus plays a role in cell wall recycling. This Shigella sonnei (strain Ss046) protein is N-acetylmuramic acid 6-phosphate etherase.